Consider the following 70-residue polypeptide: Small ribosomal subunit protein bS21 (70 aa).

It belongs to the bacterial ribosomal protein bS21 family.

This Delftia acidovorans (strain DSM 14801 / SPH-1) protein is Small ribosomal subunit protein bS21.